Reading from the N-terminus, the 141-residue chain is Large ribosomal subunit protein uL16 (141 aa).

The disordered stretch occupies residues 1–23 (MLMPKRTKYRKQMKGRNRGKAHR).

Belongs to the universal ribosomal protein uL16 family. In terms of assembly, part of the 50S ribosomal subunit.

Its function is as follows. Binds 23S rRNA and is also seen to make contacts with the A and possibly P site tRNAs. The chain is Large ribosomal subunit protein uL16 from Helicobacter pylori (strain J99 / ATCC 700824) (Campylobacter pylori J99).